The chain runs to 467 residues: Replication factor A 51 kDa subunit (467 aa).

The OB DNA-binding region spans 23-105 (WWIRARVADK…SNVNNDYELT (83 aa)). The C4-type zinc-finger motif lies at 313-335 (CPTCNKKVTEEGAQGDRFRCEKC).

Belongs to the replication factor A protein 1 family. In terms of assembly, component of the heterotrimeric canonical replication protein A complex (RPA). Post-translationally, the N-terminus is blocked.

Its subcellular location is the nucleus. Its function is as follows. As part of the heterotrimeric replication protein A complex (RPA/RP-A), binds and stabilizes single-stranded DNA intermediates, that form during DNA replication or upon DNA stress. It prevents their reannealing and in parallel, recruits and activates different proteins and complexes involved in DNA metabolism. Thereby, it plays an essential role both in DNA replication and the cellular response to DNA damage. In Crithidia fasciculata, this protein is Replication factor A 51 kDa subunit (RPA1).